Reading from the N-terminus, the 1337-residue chain is Phosphoribosylformylglycinamidine synthase (1337 aa).

S215 carries the post-translational modification Phosphoserine. Residues 322 to 333 (GATTGTGGRIRD) and 402 to 404 (AGF) each bind ATP. Phosphothreonine is present on residues T619 and T622. A705 serves as a coordination point for ATP. Residues D706, E745, N749, and D908 each contribute to the Mg(2+) site. S910 contributes to the ATP binding site. The region spanning 1063-1301 (RVAILREEGS…ALMPHPERAV (239 aa)) is the Glutamine amidotransferase type-1 domain. C1157 (nucleophile) is an active-site residue. Residues H1296 and E1298 contribute to the active site.

In the N-terminal section; belongs to the FGAMS family.

It localises to the cytoplasm. It carries out the reaction N(2)-formyl-N(1)-(5-phospho-beta-D-ribosyl)glycinamide + L-glutamine + ATP + H2O = 2-formamido-N(1)-(5-O-phospho-beta-D-ribosyl)acetamidine + L-glutamate + ADP + phosphate + H(+). It functions in the pathway purine metabolism; IMP biosynthesis via de novo pathway; 5-amino-1-(5-phospho-D-ribosyl)imidazole from N(2)-formyl-N(1)-(5-phospho-D-ribosyl)glycinamide: step 1/2. Its function is as follows. Phosphoribosylformylglycinamidine synthase involved in the purines biosynthetic pathway. Catalyzes the ATP-dependent conversion of formylglycinamide ribonucleotide (FGAR) and glutamine to yield formylglycinamidine ribonucleotide (FGAM) and glutamate. This Mus musculus (Mouse) protein is Phosphoribosylformylglycinamidine synthase (Pfas).